Consider the following 161-residue polypeptide: Cyclic pyranopterin monophosphate synthase (161 aa).

Residues 75–77 (LCH) and 113–114 (ME) each bind substrate. Residue D128 is part of the active site.

It belongs to the MoaC family. Homohexamer; trimer of dimers.

It carries out the reaction (8S)-3',8-cyclo-7,8-dihydroguanosine 5'-triphosphate = cyclic pyranopterin phosphate + diphosphate. The protein operates within cofactor biosynthesis; molybdopterin biosynthesis. In terms of biological role, catalyzes the conversion of (8S)-3',8-cyclo-7,8-dihydroguanosine 5'-triphosphate to cyclic pyranopterin monophosphate (cPMP). The polypeptide is Cyclic pyranopterin monophosphate synthase (Salmonella typhi).